Reading from the N-terminus, the 412-residue chain is Tryptophan synthase beta chain (412 aa).

An N6-(pyridoxal phosphate)lysine modification is found at lysine 105.

The protein belongs to the TrpB family. Tetramer of two alpha and two beta chains. The cofactor is pyridoxal 5'-phosphate.

The enzyme catalyses (1S,2R)-1-C-(indol-3-yl)glycerol 3-phosphate + L-serine = D-glyceraldehyde 3-phosphate + L-tryptophan + H2O. It functions in the pathway amino-acid biosynthesis; L-tryptophan biosynthesis; L-tryptophan from chorismate: step 5/5. Its function is as follows. The beta subunit is responsible for the synthesis of L-tryptophan from indole and L-serine. This is Tryptophan synthase beta chain (trpB) from Synechocystis sp. (strain ATCC 27184 / PCC 6803 / Kazusa).